Here is a 575-residue protein sequence, read N- to C-terminus: Intermediate filament protein ifd-1 (575 aa).

Residues 1–56 are head; that stretch reads MSKLNPRVAHNPVLSRIIESGRTNLPSGITSAGSLSAYAQAAAVTIRDNRDREKRE. The 354-residue stretch at 53–406 folds into the IF rod domain; the sequence is EKREIADLNN…KLMEQAENLR (354 aa). The interval 57–88 is coil 1A; the sequence is IADLNNRLARYVEKVRFLEAQNRVLENDIGLF. Residues 89-102 form a linker 1 region; it reads RQAAHIHTGKVRDY. The tract at residues 103-240 is coil 1B; sequence YDAEKTSLAT…STHEIAIREE (138 aa). The interval 241–258 is linker 12; that stretch reads INKARRDSTDKNREFFHR. The coil 2 stretch occupies residues 259–408; that stretch reads ELHMSMKEIR…MEQAENLRTS (150 aa). Residues 409-572 form a tail region; it reads YQSDFVIDTP…DEVGWYAHVS (164 aa). The region spanning 459 to 575 is the LTD domain; it reads NTQQFRSYGK…GWYAHVSYSH (117 aa).

This sequence belongs to the intermediate filament family.

It is found in the cytoplasm. Its function is as follows. Cytoplasmic intermediate filaments provide mechanical strength to cells. Not essential protein. This is Intermediate filament protein ifd-1 from Caenorhabditis elegans.